The sequence spans 450 residues: 6-phospho-beta-glucosidase (450 aa).

5–73 (LKVVTIGGGS…VPMKLYKTLD (69 aa)) serves as a coordination point for NAD(+). The substrate site is built by Arg-96 and Asn-150. Residues Cys-172 and His-203 each coordinate Mn(2+). The active-site Proton acceptor is the Tyr-258.

In terms of assembly, homotetramer. Requires NAD(+) as cofactor. It depends on Mn(2+) as a cofactor. Co(2+) is required as a cofactor. Ni(2+) serves as cofactor.

The enzyme catalyses 6-phospho-beta-D-glucosyl-(1-&gt;4)-D-glucose + H2O = D-glucose 6-phosphate + D-glucose. In terms of biological role, hydrolyzes a wide variety of P-beta-glucosides including cellobiose-6P, salicin-6P, arbutin-6P, gentiobiose-6P, methyl-beta-glucoside-6P and p-nitrophenyl-beta-D-glucopyranoside-6P. Is also able to hydrolyze phospho-N,N'-diacetylchitobiose. In Escherichia coli (strain K12), this protein is 6-phospho-beta-glucosidase (chbF).